We begin with the raw amino-acid sequence, 491 residues long: Glutamyl-tRNA(Gln) amidotransferase subunit A (491 aa).

Active-site charge relay system residues include lysine 79 and serine 158. Residue serine 182 is the Acyl-ester intermediate of the active site.

It belongs to the amidase family. GatA subfamily. In terms of assembly, heterotrimer of A, B and C subunits.

The catalysed reaction is L-glutamyl-tRNA(Gln) + L-glutamine + ATP + H2O = L-glutaminyl-tRNA(Gln) + L-glutamate + ADP + phosphate + H(+). In terms of biological role, allows the formation of correctly charged Gln-tRNA(Gln) through the transamidation of misacylated Glu-tRNA(Gln) in organisms which lack glutaminyl-tRNA synthetase. The reaction takes place in the presence of glutamine and ATP through an activated gamma-phospho-Glu-tRNA(Gln). The protein is Glutamyl-tRNA(Gln) amidotransferase subunit A of Maricaulis maris (strain MCS10) (Caulobacter maris).